A 92-amino-acid chain; its full sequence is MKILLLTLVVVTIVCLDLAYTRTCFRTPYKPETCPPGQNLCYKKSWCDAFCSSRGKVIELGCTAKCPTVKDGKDITCCATDNCNTVANWKSR.

A signal peptide spans 1-21 (MKILLLTLVVVTIVCLDLAYT). 5 cysteine pairs are disulfide-bonded: Cys24-Cys41, Cys34-Cys62, Cys47-Cys51, Cys66-Cys77, and Cys78-Cys83.

It belongs to the three-finger toxin family. Long-chain subfamily. Type II alpha-neurotoxin sub-subfamily. In terms of tissue distribution, expressed by the venom gland.

It localises to the secreted. Functionally, binds with high affinity to muscular (alpha-1/CHRNA1) and neuronal (alpha-7/CHRNA7) nicotinic acetylcholine receptor (nAChR) and inhibits acetylcholine from binding to the receptor, thereby impairing neuromuscular and neuronal transmission. This is Long neurotoxin 1 from Hydrophis hardwickii (Hardwick's spine-bellied seasnake).